Consider the following 250-residue polypeptide: 7-carboxy-7-deazaguanine synthase (250 aa).

Substrate is bound by residues V15–G17 and R30. Positions L21–L250 constitute a Radical SAM core domain. The [4Fe-4S] cluster site is built by C34, C38, and C41. T43 contacts Mg(2+). T96 provides a ligand contact to substrate. An S-adenosyl-L-methionine-binding site is contributed by G98.

The protein belongs to the radical SAM superfamily. 7-carboxy-7-deazaguanine synthase family. In terms of assembly, homodimer. Requires [4Fe-4S] cluster as cofactor. The cofactor is S-adenosyl-L-methionine. Mg(2+) is required as a cofactor.

It catalyses the reaction 6-carboxy-5,6,7,8-tetrahydropterin + H(+) = 7-carboxy-7-deazaguanine + NH4(+). The protein operates within purine metabolism; 7-cyano-7-deazaguanine biosynthesis. Its function is as follows. Catalyzes the complex heterocyclic radical-mediated conversion of 6-carboxy-5,6,7,8-tetrahydropterin (CPH4) to 7-carboxy-7-deazaguanine (CDG), a step common to the biosynthetic pathways of all 7-deazapurine-containing compounds. The protein is 7-carboxy-7-deazaguanine synthase of Geobacter sulfurreducens (strain ATCC 51573 / DSM 12127 / PCA).